We begin with the raw amino-acid sequence, 391 residues long: S-adenosylmethionine synthase 1 (391 aa).

Glu-9 is a Mg(2+) binding site. Residue His-15 participates in ATP binding. Position 43 (Glu-43) interacts with K(+). L-methionine is bound by residues Glu-56 and Gln-99. ATP-binding positions include 167 to 169, 235 to 238, Asp-246, 252 to 253, Ala-269, Lys-273, and Lys-277; these read DGK, SGRF, and RK. Residue Asp-246 coordinates L-methionine. Lys-277 is an L-methionine binding site.

This sequence belongs to the AdoMet synthase family. Homotetramer. The cofactor is Mn(2+). Mg(2+) serves as cofactor. Co(2+) is required as a cofactor. It depends on K(+) as a cofactor.

The protein localises to the cytoplasm. It catalyses the reaction L-methionine + ATP + H2O = S-adenosyl-L-methionine + phosphate + diphosphate. It functions in the pathway amino-acid biosynthesis; S-adenosyl-L-methionine biosynthesis; S-adenosyl-L-methionine from L-methionine: step 1/1. Catalyzes the formation of S-adenosylmethionine from methionine and ATP. The reaction comprises two steps that are both catalyzed by the same enzyme: formation of S-adenosylmethionine (AdoMet) and triphosphate, and subsequent hydrolysis of the triphosphate. In Vitis vinifera (Grape), this protein is S-adenosylmethionine synthase 1 (METK1).